The following is a 50-amino-acid chain: Penaeidin-1 (50 aa).

Cystine bridges form between Cys-25/Cys-38, Cys-27/Cys-45, and Cys-39/Cys-46.

In terms of tissue distribution, higher expression in hemocytes and to a lesser extent in heart, testis, gills, intestine, lymphoid organ and hepatopancreas. Traces in eyes and subcuticular epithelium. Not present in the brain.

The protein localises to the cytoplasmic granule. Antibacterial activity against M.luteus and E.coli bacteria. Antifungal activity against N.crassa and F.oxysporum. Presents chitin-binding activity. The sequence is that of Penaeidin-1 from Penaeus vannamei (Whiteleg shrimp).